A 229-amino-acid polypeptide reads, in one-letter code: Mannose-specific lectin TAR1 (229 aa).

The first 23 residues, 1 to 23 (MAKLLLFLLPAILGLLIPRSAVA), serve as a signal peptide directing secretion. 2 Bulb-type lectin domains span residues 26 to 131 (TNYL…PWVP) and 145 to 229 (DNLL…DYVL). Beta-D-mannose is bound by residues 51-55 (QNDCN), tyrosine 59, tryptophan 63, glutamine 64, 170-174 (QGDCN), tyrosine 178, and 182-185 (YGWQ). Positions 51-59 (QNDCNLVLY) match the Carbohydrate-binding motif 1 motif. 2 disulfide bridges follow: cysteine 54–cysteine 74 and cysteine 173–cysteine 195. A Carbohydrate-binding motif 2 motif is present at residues 170-178 (QGDCNLVLY).

Forms heterotetramer of 2 chains 1 and 2 chains 2 arranged as a dimer of chain 1 and chain 2 heterodimers.

It localises to the secreted. Its function is as follows. Mannose-specific lectin. Shows agglutinating activity towards erythrocytes from rabbit. The polypeptide is Mannose-specific lectin TAR1 (Colocasia esculenta (Wild taro)).